A 115-amino-acid polypeptide reads, in one-letter code: Large ribosomal subunit protein bL19 (115 aa).

It belongs to the bacterial ribosomal protein bL19 family.

In terms of biological role, this protein is located at the 30S-50S ribosomal subunit interface and may play a role in the structure and function of the aminoacyl-tRNA binding site. The sequence is that of Large ribosomal subunit protein bL19 from Streptococcus equi subsp. equi (strain 4047).